The following is a 215-amino-acid chain: Ras-like GTP-binding protein RHO1 (215 aa).

Ala30, Val31, Gly32, Lys33, Thr34, and Cys35 together coordinate GTP. Residue Thr34 participates in Mg(2+) binding. 2 short sequence motifs (switch) span residues Gly43–Phe54 and Asp74–Asp93. Residue Thr52 coordinates Mg(2+). GTP is bound by residues Asp135 and Ser166. Residues Val194–Gln215 are disordered. The segment covering Thr195–Thr204 has biased composition (low complexity). Basic residues predominate over residues Gln206 to Gln215. The residue at position 212 (Cys212) is a Cysteine methyl ester. Cys212 carries S-geranylgeranyl cysteine lipidation. Residues Leu213 to Gln215 constitute a propeptide, removed in mature form.

The protein belongs to the small GTPase superfamily. Rho family. Interacts (GTP-bound form) with formin1 (via GBD/FH3 domain); the interaction activates formin1. Interacts (GTP-bound form) with profilin1. Interacts (GDP-bound form and when prenylated) with RhoGDI. It depends on Mg(2+) as a cofactor.

It is found in the cell membrane. The protein resides in the cytoplasm. Its subcellular location is the cytoskeleton. The protein localises to the cell projection. It localises to the phagocytic cup. It is found in the cytoplasmic vesicle. The protein resides in the phagosome. It catalyses the reaction GTP + H2O = GDP + phosphate + H(+). With respect to regulation, regulated by guanine nucleotide exchange factors (GEFs) which promote the exchange of bound GDP for free GTP, GTPase activating proteins (GAPs) which increase the GTP hydrolysis activity and GDP dissociation inhibitors which inhibit the dissociation of the nucleotide from the GTPase. Small GTPase which cycles between active GTP-bound and inactive GDP-bound states. Involved in actin cytoskeleton remodeling. Regulates phagocytosis by modulating actin cytoskeleton dynamics through the recruitment of formin1 and profilin1 to the phagocytosis nucleation site. The sequence is that of Ras-like GTP-binding protein RHO1 from Entamoeba histolytica (strain ATCC 30459 / HM-1:IMSS / ABRM).